Consider the following 90-residue polypeptide: Large ribosomal subunit protein uL16c (90 aa).

The protein belongs to the universal ribosomal protein uL16 family. Part of the 50S ribosomal subunit.

It is found in the plastid. It localises to the chloroplast. The protein is Large ribosomal subunit protein uL16c (rpl16) of Oenothera ammophila (Evening primerose).